Consider the following 216-residue polypeptide: Large ribosomal subunit protein eL15 (216 aa).

Basic residues predominate over residues 170–188 (RGLRKSKGFKGTVKHKWSR). Residues 170–201 (RGLRKSKGFKGTVKHKWSRKQKEREEKKRHEA) form a disordered region. The span at 189–201 (KQKEREEKKRHEA) shows a compositional bias: basic and acidic residues.

The protein belongs to the eukaryotic ribosomal protein eL15 family.

In Saccharolobus islandicus (strain M.16.27) (Sulfolobus islandicus), this protein is Large ribosomal subunit protein eL15.